A 344-amino-acid polypeptide reads, in one-letter code: tRNA N6-adenosine threonylcarbamoyltransferase (344 aa).

His110 and His114 together coordinate Fe cation. Residues 133-137, Asp166, Gly179, and Asn278 contribute to the substrate site; that span reads VVSGA. Asp303 lines the Fe cation pocket.

This sequence belongs to the KAE1 / TsaD family. Requires Fe(2+) as cofactor.

The protein resides in the cytoplasm. It carries out the reaction L-threonylcarbamoyladenylate + adenosine(37) in tRNA = N(6)-L-threonylcarbamoyladenosine(37) in tRNA + AMP + H(+). In terms of biological role, required for the formation of a threonylcarbamoyl group on adenosine at position 37 (t(6)A37) in tRNAs that read codons beginning with adenine. Is involved in the transfer of the threonylcarbamoyl moiety of threonylcarbamoyl-AMP (TC-AMP) to the N6 group of A37, together with TsaE and TsaB. TsaD likely plays a direct catalytic role in this reaction. The chain is tRNA N6-adenosine threonylcarbamoyltransferase from Chlamydia abortus (strain DSM 27085 / S26/3) (Chlamydophila abortus).